The chain runs to 311 residues: Altered inheritance of mitochondria protein 32 (311 aa).

Belongs to the AIM32 family.

This is Altered inheritance of mitochondria protein 32 (AIM32) from Saccharomyces kudriavzevii (strain ATCC MYA-4449 / AS 2.2408 / CBS 8840 / NBRC 1802 / NCYC 2889) (Yeast).